The chain runs to 227 residues: Small ribosomal subunit protein uS3 (227 aa).

Positions 38-106 (LRKFIKDRFY…NVNINIQEIR (69 aa)) constitute a KH type-2 domain.

It belongs to the universal ribosomal protein uS3 family. Part of the 30S ribosomal subunit. Forms a tight complex with proteins S10 and S14.

Binds the lower part of the 30S subunit head. Binds mRNA in the 70S ribosome, positioning it for translation. The polypeptide is Small ribosomal subunit protein uS3 (Syntrophomonas wolfei subsp. wolfei (strain DSM 2245B / Goettingen)).